Here is a 151-residue protein sequence, read N- to C-terminus: uncharacterized protein (151 aa).

This is an uncharacterized protein from Saccharomyces cerevisiae (strain ATCC 204508 / S288c) (Baker's yeast).